The sequence spans 208 residues: Small ribosomal subunit protein uS4 (208 aa).

Residues 32–53 (LNRKRGKNSPGQHGASKVKMSD) are disordered. The S4 RNA-binding domain occupies 99–161 (LRLDNVVYRL…YKSNVIIKKL (63 aa)).

Belongs to the universal ribosomal protein uS4 family. Part of the 30S ribosomal subunit. Contacts protein S5. The interaction surface between S4 and S5 is involved in control of translational fidelity.

In terms of biological role, one of the primary rRNA binding proteins, it binds directly to 16S rRNA where it nucleates assembly of the body of the 30S subunit. With S5 and S12 plays an important role in translational accuracy. The sequence is that of Small ribosomal subunit protein uS4 from Endomicrobium trichonymphae.